Reading from the N-terminus, the 252-residue chain is MSDWNPSLYLHFAAERSRPAVELLARVPLENIEYVADLGCGPGNSTALLNQRWPAARITGIDSSPAMIAEARSALPDCQFVEADIRNWQPEQALDLIFANASLQWLPDHYELFPHLVSLLNPQGVLAVQMPDNWLEPTHVLMREVAWEQNYPDRGRESLAGIHAYYDILSEAGCEVDIWRTTYYHQMPSHQAIIDWVTATGLRPWLQDLAESEQQLFLTRYHQMLEEQYPLQENGQILLAFPRLFIVARRTE.

The protein belongs to the methyltransferase superfamily. Tam family.

It localises to the cytoplasm. The catalysed reaction is trans-aconitate + S-adenosyl-L-methionine = (E)-3-(methoxycarbonyl)pent-2-enedioate + S-adenosyl-L-homocysteine. Catalyzes the S-adenosylmethionine monomethyl esterification of trans-aconitate. The chain is Trans-aconitate 2-methyltransferase from Escherichia coli (strain 55989 / EAEC).